Consider the following 479-residue polypeptide: Cardiolipin synthase (479 aa).

The next 2 helical transmembrane spans lie at 5 to 25 and 34 to 54; these read SLLLGLTFVLNIALAISIIFL and WAWVMVLLFIPILGFFLYLIF. PLD phosphodiesterase domains are found at residues 216-243 and 392-419; these read INYRNHRKLAIIDGYIGYLGGFNVGDEY and QNGFLHAKTIIVDGRIASVGTANIDVRS. Residues H221, K223, D228, H397, K399, and D404 contribute to the active site.

Belongs to the phospholipase D family. Cardiolipin synthase subfamily.

The protein localises to the cell membrane. The enzyme catalyses 2 a 1,2-diacyl-sn-glycero-3-phospho-(1'-sn-glycerol) = a cardiolipin + glycerol. Functionally, catalyzes the reversible phosphatidyl group transfer from one phosphatidylglycerol molecule to another to form cardiolipin (CL) (diphosphatidylglycerol) and glycerol. The protein is Cardiolipin synthase (cls) of Oceanobacillus iheyensis (strain DSM 14371 / CIP 107618 / JCM 11309 / KCTC 3954 / HTE831).